The chain runs to 109 residues: Putative small proline-rich protein 2J (109 aa).

A run of 5 repeats spans residues 21–29 (RSAQSPVLC), 30–38 (QSAPSLVLL), 39–47 (QSAQSPIHC), 48–56 (QSALSHAHL), and 57–65 (SHASRNALL). The tract at residues 21 to 65 (RSAQSPVLCQSAPSLVLLQSAQSPIHCQSALSHAHLSHASRNALL) is 5 X 9 AA approximate tandem repeats. A disordered region spans residues 76-109 (AHPRANKGFSSLQNQKKRTESILHKSIATPPSSI).

This sequence belongs to the cornifin (SPRR) family. Not expressed in uterus.

Its subcellular location is the cytoplasm. Cross-linked envelope protein of keratinocytes. It is a keratinocyte protein that first appears in the cell cytosol, but ultimately becomes cross-linked to membrane proteins by transglutaminase. All that results in the formation of an insoluble envelope beneath the plasma membrane. The sequence is that of Putative small proline-rich protein 2J (Sprr2j) from Mus musculus (Mouse).